The primary structure comprises 186 residues: Threonylcarbamoyl-AMP synthase (186 aa).

Residues 2–186 form the YrdC-like domain; sequence STEFEQAVAA…ARTGAVIRPS (185 aa).

The protein belongs to the SUA5 family. TsaC subfamily.

It localises to the cytoplasm. The enzyme catalyses L-threonine + hydrogencarbonate + ATP = L-threonylcarbamoyladenylate + diphosphate + H2O. In terms of biological role, required for the formation of a threonylcarbamoyl group on adenosine at position 37 (t(6)A37) in tRNAs that read codons beginning with adenine. Catalyzes the conversion of L-threonine, HCO(3)(-)/CO(2) and ATP to give threonylcarbamoyl-AMP (TC-AMP) as the acyladenylate intermediate, with the release of diphosphate. The sequence is that of Threonylcarbamoyl-AMP synthase from Aeromonas salmonicida (strain A449).